We begin with the raw amino-acid sequence, 479 residues long: MEKLAAFILVLTLLCAYWQSAEGIREYSYADCTDVKGDSAHRYSGSRCFCYSPGTVIKWKDIWSTFKVNVSSNVDVVVVFPMETINCHHPDDLLTVMNCFVEHYWPSTVQRETSLEIPLVDVDICFMIKSPRSNTEYTLHVSNKRLNRMCFLLFVCGLILFFGARNICRSSLFFYTTGVSLGIIATFVFLTLLLRNFVPKRGLFLVLLGAGSGLSYMGIQRVLNEWDDIVTEHWMELLAYVLISGLFSFAVCYKHGPITNKHTLNFMTCSMQAVGIVLLYYGITFPPAYFVLVAVLLCWKILPLAWSLLMGICSLFYSFLALFRRRRRPTVRLLTEEEYREQGEIHTRASLDELREYCNRPGFPAWETVLRLRSPQRFAEFLRQGSHITQEEHQNHENHYGLGGAYYENVIFNNSSSSDTQSHREEAEDNSEDEIVGNSPPVLNNLPSPTIYPPTICPYPPVTYTPQPEPLDPEDQDFF.

Residues 1–23 (MEKLAAFILVLTLLCAYWQSAEG) form the signal peptide. Asparagine 69 carries N-linked (GlcNAc...) asparagine glycosylation. The next 5 membrane-spanning stretches (helical) occupy residues 172 to 192 (LFFY…FLTL), 203 to 223 (LFLV…QRVL), 233 to 253 (HWME…AVCY), 276 to 296 (IVLL…VAVL), and 301 to 321 (ILPL…SFLA). N-linked (GlcNAc...) asparagine glycosylation is present at asparagine 414. The tract at residues 414-479 (NSSSSDTQSH…PLDPEDQDFF (66 aa)) is disordered. Residues 438-449 (NSPPVLNNLPSP) show a composition bias toward low complexity. Over residues 450 to 470 (TIYPPTICPYPPVTYTPQPEP) the composition is skewed to pro residues.

It belongs to the NEMP family.

It is found in the nucleus inner membrane. Its function is as follows. Contributes to nuclear envelope stiffness in germ cells. Involved in male and female fertility. This Danio rerio (Zebrafish) protein is Nuclear envelope integral membrane protein 2.